Consider the following 493-residue polypeptide: FAD-linked oxidoreductase tazL (493 aa).

The first 17 residues, 1–17 (MRSNTVILAALPLVASA), serve as a signal peptide directing secretion. N29, N41, N53, N91, N253, N318, and N387 each carry an N-linked (GlcNAc...) asparagine glycan. The FAD-binding PCMH-type domain occupies 63 to 235 (WAEPTFAVTI…TSATYEIFDA (173 aa)).

This sequence belongs to the oxygen-dependent FAD-linked oxidoreductase family.

The protein operates within secondary metabolite biosynthesis. FAD-linked oxidoreductase; part of the gene cluster that mediates the biosynthesis of azaterrilone A and other azaphilones, a class of fungal metabolites characterized by a highly oxygenated pyrano-quinone bicyclic core and exhibiting a broad range of bioactivities. The first step of the pathway begins with the non-reducing polyketide synthase tazA that assembles one acetyl-CoA starter unit, five malonyl-CoA units, and catalyzes a series of Claisen condensations, methylation, PT-mediated cyclization, and finally releases the first hexaketide precursor through the R-domain. The tazA product then undergoes reduction on its terminal ketone and the following pyran-ring formation by yet undetermined enzyme(s). Dehydration and enoyl reduction, possibly involving the trans-enoyl reductase tazE leads to the next intermediate. TazD is predicted as an acetyltransferase and might catalyze the acetylation steps leading to the synthesis of azaterrilone A. Azaterrilone A is not the final product of the taz pathway and both the highly reducing polyketide synthase tazB and the dual enzyme tazHJ catalyze late steps of the pathway, leading to the production of the 2 final stereoisomers that contain additional polyketide modification whose structures have still to be determined. In Aspergillus terreus (strain NIH 2624 / FGSC A1156), this protein is FAD-linked oxidoreductase tazL.